Here is a 253-residue protein sequence, read N- to C-terminus: H repeat-associated putative transposase YbfD (253 aa).

The protein belongs to the transposase 11 family.

This chain is H repeat-associated putative transposase YbfD (ybfD), found in Escherichia coli (strain K12).